The primary structure comprises 667 residues: Receptor for retinol uptake STRA6 (667 aa).

A compositionally biased stretch (polar residues) spans 1–13; the sequence is MSSQPAGNQTSPG. Positions 1-20 are disordered; the sequence is MSSQPAGNQTSPGATEDYSY. At 1–50 the chain is on the extracellular side; that stretch reads MSSQPAGNQTSPGATEDYSYGSWYIDEPQGGEELQPEGEVPSCHTSIPPG. Asn-8 is a glycosylation site (N-linked (GlcNAc...) asparagine). A helical transmembrane segment spans residues 51–71; the sequence is LYHACLASLSILVLLLLAMLV. The Cytoplasmic portion of the chain corresponds to 72 to 100; it reads RRRQLWPDCVRGRPGLPSPVDFLAGDRPR. Residues 101–121 traverse the membrane as a helical segment; it reads AVPAAVFMVLLSSLCLLLPDE. Over 122-144 the chain is Extracellular; that stretch reads DALPFLTLASAPSQDGKTEAPRG. The chain crosses the membrane as a helical span at residues 145–165; the sequence is AWKILGLFYYAALYYPLAACA. Residues 166–168 lie on the Cytoplasmic side of the membrane; the sequence is TAG. Residues 169–189 form a helical membrane-spanning segment; sequence HTAAHLLGSTLSWAHLGVQVW. The Extracellular segment spans residues 190–205; that stretch reads QRAECPQVPKIYKYYS. Residues 206 to 226 form a helical membrane-spanning segment; the sequence is LLASLPLLLGLGFLSLWYPVQ. Residues 227 to 295 lie on the Cytoplasmic side of the membrane; the sequence is LVRSFSRRTG…PQPGFHLPLK (69 aa). Positions 235–293 are interaction with RBP1; that stretch reads TGAGSKGLQSSYSEEYLRNLLCRKKLGSSYHTSKHGFLSWARVCLRHCIYTPQPGFHLP. Residues 296–316 form a helical membrane-spanning segment; sequence LVLSATLTGTAIYQVALLLLV. Residues 317–367 are Extracellular-facing; the sequence is GVVPTIQKVRAGVTTDVSYLLAGFGIVLSEDKQEVVELVKHHLWALEVCYI. A helical membrane pass occupies residues 368-388; that stretch reads SALVLSCLLTFLVLMRSLVTH. Topologically, residues 389-422 are cytoplasmic; that stretch reads RTNLRALHRGAALDLSPLHRSPHPSRQAIFCWMS. The chain crosses the membrane as a helical span at residues 423–443; it reads FSAYQTAFICLGLLVQQIIFF. Residues 444–473 are Extracellular-facing; it reads LGTTALAFLVLMPVLHGRNLLLFRSLESSW. Residues 474 to 494 form a helical membrane-spanning segment; it reads PFWLTLALAVILQNMAAHWVF. Topologically, residues 495–509 are cytoplasmic; sequence LETHDGHPQLTNRRV. Residues 510 to 547 constitute an intramembrane region (helical); it reads LYAATFLLFPLNVLVGAMVATWRVLLSALYNAIHLGQM. The Cytoplasmic segment spans residues 548 to 667; that stretch reads DLSLLPPRAA…ALLGANGAQP (120 aa). Residue Tyr-643 is modified to Phosphotyrosine.

As to quaternary structure, homodimer. Interacts with JAK2 and STAT5. Interacts (via extracellular domains) with RBP4. Interacts (via cytoplasmic domains) with RBP1. Post-translationally, phosphorylated on tyrosine residues in response to RBP4 binding. Phosphorylation requires the presence of LRAT, suggesting it may be triggered by the uptake of retinol that is then metabolized within the cell to retinoids that function as signaling molecules. Broad expression. In adult eye expressed in sclera, retina, retinal pigment epithelium, and trabecular meshwork but not in choroid and iris.

The protein localises to the cell membrane. In terms of biological role, functions as a retinol transporter. Accepts all-trans retinol from the extracellular retinol-binding protein RBP4, facilitates retinol transport across the cell membrane, and then transfers retinol to the cytoplasmic retinol-binding protein RBP1. Retinol uptake is enhanced by LRAT, an enzyme that converts retinol to all-trans retinyl esters, the storage forms of vitamin A. Contributes to the activation of a signaling cascade that depends on retinol transport and LRAT-dependent generation of retinol metabolites that then trigger activation of JAK2 and its target STAT5, and ultimately increase the expression of SOCS3 and inhibit cellular responses to insulin. Important for the homeostasis of vitamin A and its derivatives, such as retinoic acid. STRA6-mediated transport is particularly important in the eye, and under conditions of dietary vitamin A deficiency. Does not transport retinoic acid. This chain is Receptor for retinol uptake STRA6 (STRA6), found in Homo sapiens (Human).